The sequence spans 55 residues: Large ribosomal subunit protein bL33 (55 aa).

It belongs to the bacterial ribosomal protein bL33 family.

The polypeptide is Large ribosomal subunit protein bL33 (Rhodopseudomonas palustris (strain HaA2)).